Consider the following 207-residue polypeptide: Protein GrpE (207 aa).

Positions 1–31 (MSEHQTPPEEDLTVANGDSAEAVSEPDVTVA) are disordered.

This sequence belongs to the GrpE family. As to quaternary structure, homodimer.

The protein localises to the cytoplasm. In terms of biological role, participates actively in the response to hyperosmotic and heat shock by preventing the aggregation of stress-denatured proteins, in association with DnaK and GrpE. It is the nucleotide exchange factor for DnaK and may function as a thermosensor. Unfolded proteins bind initially to DnaJ; upon interaction with the DnaJ-bound protein, DnaK hydrolyzes its bound ATP, resulting in the formation of a stable complex. GrpE releases ADP from DnaK; ATP binding to DnaK triggers the release of the substrate protein, thus completing the reaction cycle. Several rounds of ATP-dependent interactions between DnaJ, DnaK and GrpE are required for fully efficient folding. This Synechococcus elongatus (strain ATCC 33912 / PCC 7942 / FACHB-805) (Anacystis nidulans R2) protein is Protein GrpE.